The following is a 393-amino-acid chain: Serine/threonine-protein kinase US3 homolog (393 aa).

The Protein kinase domain occupies 93 to 378 (FVILKTFTPG…AEVLLNHSVF (286 aa)). Residues 99–107 (FTPGAEGFA) and lysine 122 each bind ATP. The active-site Proton acceptor is the aspartate 206.

Belongs to the protein kinase superfamily. Ser/Thr protein kinase family. Post-translationally, phosphorylated by ORF47; this phosphorylation regulates subsequent phosphorylation of proteins 24 and 27 by ORF66. Autophosphorylated.

It localises to the host cytoplasm. Its subcellular location is the host nucleus. It catalyses the reaction L-seryl-[protein] + ATP = O-phospho-L-seryl-[protein] + ADP + H(+). The catalysed reaction is L-threonyl-[protein] + ATP = O-phospho-L-threonyl-[protein] + ADP + H(+). Its function is as follows. Multifunctional serine/threonine kinase that plays a role in several processes including egress of virus particles from the nucleus, modulation of the actin cytoskeleton and inhibition of apoptosis. Phosphorylates proteins 24 and 27, two critical regulators of capsid budding from nucleus to endoplasmic reticulum, thereby facilitating virion egress. Modulates and redistributes host components of the nuclear envelope, including LMNA, emerin/EMD and the nuclear matrix protein MATR3. Phosphorylates envelope glycoprotein B (gB), probably to direct it to the cell surface. Promotes virus intracellular spread by restructuring host cell cytoskeleton. Blocks host apoptosis to extend cell survival and allow efficient viral replication. Promotes viral gene expression by phosphorylating host HDAC2 to reduce viral genome silencing. Down-regulates class I major histocompatibility complex (MHC-I) surface expression. Additionally, phosphorylates IE62 and targets it to the cytoplasm. The nuclear exclusion of IE62 enables the packaging of abundant levels of IE62 into virions. The protein is Serine/threonine-protein kinase US3 homolog (66) of Varicella-zoster virus (strain Dumas) (HHV-3).